A 325-amino-acid polypeptide reads, in one-letter code: MTKSQQKLASIEQLSNQDGIISALAFDQRGALKRMMAEHQTEPPTVEQIEQLKVLVSEELTQYASSILLDPEYGLPASDARNKECGLLLAYEKTGYDVNAKGRLPDCLVEWSAKRLKEQGANAVKFLLYYDVDDSEEINIQKKAYIERIGSECVAEDIPFFLEVLTYDDNIPDNKSAEFAKVKPRKVNEAMKLFSEDRFNVDVLKVEVPVNMNFVEGFTEGEVVYTKEEAAQHFRDQEAATHLPYIYLSAGVSAELFQETLTFAHDAGAHFNGVLCGRATWSGAVKVYIEQGEQAAREWLRTTGYKNIDDLNKVLKTTATSWKAK.

It belongs to the aldolase LacD family.

It catalyses the reaction D-tagatofuranose 1,6-bisphosphate = D-glyceraldehyde 3-phosphate + dihydroxyacetone phosphate. It participates in carbohydrate metabolism; D-tagatose 6-phosphate degradation; D-glyceraldehyde 3-phosphate and glycerone phosphate from D-tagatose 6-phosphate: step 2/2. This Staphylococcus haemolyticus (strain JCSC1435) protein is Tagatose 1,6-diphosphate aldolase.